Reading from the N-terminus, the 206-residue chain is Large ribosomal subunit protein uL4 (206 aa).

The disordered stretch occupies residues 63 to 97 (MYKQKGTGRARHHSARAPQFRGGGKAHGPVVRSHE). The segment covering 64–77 (YKQKGTGRARHHSA) has biased composition (basic residues).

This sequence belongs to the universal ribosomal protein uL4 family. As to quaternary structure, part of the 50S ribosomal subunit.

In terms of biological role, one of the primary rRNA binding proteins, this protein initially binds near the 5'-end of the 23S rRNA. It is important during the early stages of 50S assembly. It makes multiple contacts with different domains of the 23S rRNA in the assembled 50S subunit and ribosome. Forms part of the polypeptide exit tunnel. The sequence is that of Large ribosomal subunit protein uL4 from Rhizobium etli (strain CIAT 652).